The sequence spans 491 residues: UDP-N-acetylmuramate--L-alanine ligase (491 aa).

Position 126 to 132 (126 to 132 (GTHGKTT)) interacts with ATP.

It belongs to the MurCDEF family.

Its subcellular location is the cytoplasm. It catalyses the reaction UDP-N-acetyl-alpha-D-muramate + L-alanine + ATP = UDP-N-acetyl-alpha-D-muramoyl-L-alanine + ADP + phosphate + H(+). It participates in cell wall biogenesis; peptidoglycan biosynthesis. In terms of biological role, cell wall formation. This is UDP-N-acetylmuramate--L-alanine ligase from Escherichia coli O1:K1 / APEC.